Reading from the N-terminus, the 227-residue chain is 2,3-bisphosphoglycerate-dependent phosphoglycerate mutase (227 aa).

Substrate is bound by residues 7-14 (RHGFSEWN), 20-21 (TG), arginine 59, 86-89 (ERHY), lysine 97, 113-114 (RR), and 182-183 (GN). Histidine 8 functions as the Tele-phosphohistidine intermediate in the catalytic mechanism. Glutamate 86 serves as the catalytic Proton donor/acceptor.

The protein belongs to the phosphoglycerate mutase family. BPG-dependent PGAM subfamily. Homodimer.

The enzyme catalyses (2R)-2-phosphoglycerate = (2R)-3-phosphoglycerate. It functions in the pathway carbohydrate degradation; glycolysis; pyruvate from D-glyceraldehyde 3-phosphate: step 3/5. Catalyzes the interconversion of 2-phosphoglycerate and 3-phosphoglycerate. In Haemophilus influenzae (strain 86-028NP), this protein is 2,3-bisphosphoglycerate-dependent phosphoglycerate mutase.